The following is a 359-amino-acid chain: MTLDSRYGGEVYGGSKVVKRMEKYRPQNAPKNRQRKLLLPLSYGISSSTLLHILNLQLERQISSGLGRRAYDIHVLNIGTCEQSDSHRLGLFREAYPLHTYTQVPLHSIFKHDTTIKDVISEYGGPEFADDPSKTDQERLDIFRLSLSTATARADIDGILLTRLVVAIAKEQDCDGILWGDSDTRLASKALSNVAKGRGFSVPWDVCDGMSPWGIQFNFPMRDLFKFELSTYASLALPKSLNVVDSERPSVDNLSNKNMSIEDLLAHYVETQGQKYPGVMANIVRTINKLQPQSADTDHKCMLCGMPVDYSGEDPAIIGGQGSSQYTLQDWRERPVAGTLCYGCARTRLDLVPPRSVSS.

Belongs to the CTU2/NCS2 family.

The protein localises to the cytoplasm. The protein operates within tRNA modification; 5-methoxycarbonylmethyl-2-thiouridine-tRNA biosynthesis. In terms of biological role, plays a central role in 2-thiolation of mcm(5)S(2)U at tRNA wobble positions of tRNA(Lys), tRNA(Glu) and tRNA(Gln). May act by forming a heterodimer with NCS6 that ligates sulfur from thiocarboxylated URM1 onto the uridine of tRNAs at wobble position. Prior mcm(5) tRNA modification by the elongator complex is required for 2-thiolation. May also be involved in protein urmylation. In Ajellomyces capsulatus (strain NAm1 / WU24) (Darling's disease fungus), this protein is Cytoplasmic tRNA 2-thiolation protein 2.